Here is a 42-residue protein sequence, read N- to C-terminus: Large ribosomal subunit protein bL36 (42 aa).

Belongs to the bacterial ribosomal protein bL36 family.

The polypeptide is Large ribosomal subunit protein bL36 (Ehrlichia ruminantium (strain Gardel)).